A 353-amino-acid polypeptide reads, in one-letter code: Photosystem II D2 protein (353 aa).

Thr-2 carries the N-acetylthreonine modification. A Phosphothreonine modification is found at Thr-2. The chain crosses the membrane as a helical span at residues 41 to 61 (CAYFALGGWFTGTTFVTSWYT). His-118 lines the chlorophyll a pocket. Residues 125 to 141 (GFMLRQFELARSVQLRP) traverse the membrane as a helical segment. Pheophytin a contacts are provided by Gln-130 and Asn-143. Residues 153–166 (VFVSVFLIYPLGQS) traverse the membrane as a helical segment. His-198 serves as a coordination point for chlorophyll a. A helical transmembrane segment spans residues 208-228 (AALLCAIHGATVENTLFEDGD). 2 residues coordinate a plastoquinone: His-215 and Phe-262. His-215 serves as a coordination point for Fe cation. Fe cation is bound at residue His-269. Residues 279 to 295 (GLWMSALGVVGLALNLR) traverse the membrane as a helical segment.

Belongs to the reaction center PufL/M/PsbA/D family. As to quaternary structure, PSII is composed of 1 copy each of membrane proteins PsbA, PsbB, PsbC, PsbD, PsbE, PsbF, PsbH, PsbI, PsbJ, PsbK, PsbL, PsbM, PsbT, PsbX, PsbY, PsbZ, Psb30/Ycf12, at least 3 peripheral proteins of the oxygen-evolving complex and a large number of cofactors. It forms dimeric complexes. It depends on The D1/D2 heterodimer binds P680, chlorophylls that are the primary electron donor of PSII, and subsequent electron acceptors. It shares a non-heme iron and each subunit binds pheophytin, quinone, additional chlorophylls, carotenoids and lipids. There is also a Cl(-1) ion associated with D1 and D2, which is required for oxygen evolution. The PSII complex binds additional chlorophylls, carotenoids and specific lipids. as a cofactor.

It is found in the plastid. The protein resides in the chloroplast thylakoid membrane. The enzyme catalyses 2 a plastoquinone + 4 hnu + 2 H2O = 2 a plastoquinol + O2. Its function is as follows. Photosystem II (PSII) is a light-driven water:plastoquinone oxidoreductase that uses light energy to abstract electrons from H(2)O, generating O(2) and a proton gradient subsequently used for ATP formation. It consists of a core antenna complex that captures photons, and an electron transfer chain that converts photonic excitation into a charge separation. The D1/D2 (PsbA/PsbD) reaction center heterodimer binds P680, the primary electron donor of PSII as well as several subsequent electron acceptors. D2 is needed for assembly of a stable PSII complex. The polypeptide is Photosystem II D2 protein (Pelargonium hortorum (Common geranium)).